The following is a 209-amino-acid chain: Claudin-4 (209 aa).

At 1–9 (MASMGLQVM) the chain is on the cytoplasmic side. The interaction with EPHA2 stretch occupies residues 1 to 103 (MASMGLQVMG…GVLLSVVGGK (103 aa)). The chain crosses the membrane as a helical span at residues 10 to 30 (GIALAVLGWLGAILSCALPMW). Residues 31–81 (RVTAFIGSNIVTSQTIWEGLWMNCVVQSTGQMQCKVYDSLLALPQDLQAAR) are Extracellular-facing. An intrachain disulfide couples cysteine 54 to cysteine 64. A helical transmembrane segment spans residues 82–102 (ALIVICIILAVFGVLLSVVGG). Topologically, residues 103 to 117 (KCTNCVDDESSKAKI) are cytoplasmic. The chain crosses the membrane as a helical span at residues 118–138 (MIVAGVVFLLAGLLVMVPVSW). The Extracellular segment spans residues 139-160 (TANNVIRDFYNPLVASGQKREM). A helical membrane pass occupies residues 161 to 181 (GASLYVGWAAAGLLILGGALL). Topologically, residues 182-209 (CFNCPPRNDKPYSAKYSAARSAPASNYV) are cytoplasmic. Position 208 is a phosphotyrosine; by EPHA2 (tyrosine 208). The tract at residues 208–209 (YV) is interactions with TJP1, TJP2 and TJP3.

This sequence belongs to the claudin family. As to quaternary structure, interacts with EPHA2; phosphorylates CLDN4 and may regulate tight junctions. Directly interacts with TJP1/ZO-1, TJP2/ZO-2 and TJP3/ZO-3. Interacts with CLDN1. Interacts with CLDN8. Post-translationally, phosphorylated. Phosphorylation by EPHA2 is stimulated by EFNA1 and alters interaction with TJP1.

It localises to the cell junction. Its subcellular location is the tight junction. The protein localises to the cell membrane. Functionally, channel-forming tight junction protein that mediates paracellular chloride transport in the kidney. Plays a critical role in the paracellular reabsorption of filtered chloride in the kidney collecting ducts. Claudins play a major role in tight junction-specific obliteration of the intercellular space, through calcium-independent cell-adhesion activity. The chain is Claudin-4 (CLDN4) from Bos taurus (Bovine).